The following is a 159-amino-acid chain: Ribose-5-phosphate isomerase B (159 aa).

Residues 8 to 9 (DH) and 67 to 71 (GSGNG) contribute to the D-ribulose 5-phosphate site. E72 acts as the Proton acceptor in catalysis. Residue H99 is the Proton donor of the active site. D-ribulose 5-phosphate-binding residues include N100, R110, R134, and R138.

This sequence belongs to the LacAB/RpiB family. In terms of assembly, homodimer.

It carries out the reaction aldehydo-D-ribose 5-phosphate = D-ribulose 5-phosphate. It participates in carbohydrate degradation; pentose phosphate pathway; D-ribose 5-phosphate from D-ribulose 5-phosphate (non-oxidative stage): step 1/1. Functionally, catalyzes the interconversion of ribulose-5-P and ribose-5-P. The polypeptide is Ribose-5-phosphate isomerase B (Mycolicibacterium paratuberculosis (strain ATCC BAA-968 / K-10) (Mycobacterium paratuberculosis)).